The sequence spans 82 residues: Putative membrane protein insertion efficiency factor (82 aa).

This sequence belongs to the UPF0161 family.

Its subcellular location is the cell inner membrane. Its function is as follows. Could be involved in insertion of integral membrane proteins into the membrane. The protein is Putative membrane protein insertion efficiency factor of Rickettsia typhi (strain ATCC VR-144 / Wilmington).